Here is an 88-residue protein sequence, read N- to C-terminus: Hemotin (88 aa).

The Lumenal portion of the chain corresponds to 1–14; it reads MDCFKVFEVVFQSE. The helical transmembrane segment at 15-37 threads the bilayer; sequence INPLLLIPAVATIALTLCCYCYH. Over 38 to 88 the chain is Cytoplasmic; it reads GYQWIRDRRTARIEEQQAQLPLPLSRISITPGCSMVATTKLTHSRNSVDIY.

As to quaternary structure, interacts with 14-3-3zeta. Expressed in hemocytes.

The protein localises to the early endosome membrane. Its function is as follows. Negatively regulates early endosome maturation by binding to and repressing the activity of 14-3-3zeta which prevents the 14-3-3zeta-mediated activation of phosphoinositide 3-kinase Pi3K68D. This, in turn, inhibits the Pi3K68D-mediated conversion of phosphatidylinositol to phosphatidylinositol-3-phosphate and prevents progression of early endosomes through the maturation process which regulates subsequent steps of phagocytic processing. The sequence is that of Hemotin from Drosophila melanogaster (Fruit fly).